The primary structure comprises 93 residues: Cobalt transport protein CbiN (93 aa).

2 helical membrane-spanning segments follow: residues 5 to 25 and 63 to 83; these read LMLL…NHGG and LLFT…LGYC.

Belongs to the CbiN family. As to quaternary structure, forms an energy-coupling factor (ECF) transporter complex composed of an ATP-binding protein (A component, CbiO), a transmembrane protein (T component, CbiQ) and 2 possible substrate-capture proteins (S components, CbiM and CbiN) of unknown stoichimetry.

It localises to the cell inner membrane. It participates in cofactor biosynthesis; adenosylcobalamin biosynthesis. In terms of biological role, part of the energy-coupling factor (ECF) transporter complex CbiMNOQ involved in cobalt import. This chain is Cobalt transport protein CbiN, found in Salmonella gallinarum (strain 287/91 / NCTC 13346).